The sequence spans 420 residues: Protein Rv2184c (420 aa).

It belongs to the arsA ATPase family.

In Mycobacterium tuberculosis (strain ATCC 25618 / H37Rv), this protein is Protein Rv2184c.